The primary structure comprises 123 residues: Large ribosomal subunit protein uL14 (123 aa).

Belongs to the universal ribosomal protein uL14 family. Part of the 50S ribosomal subunit. Forms a cluster with proteins L3 and L19. In the 70S ribosome, L14 and L19 interact and together make contacts with the 16S rRNA in bridges B5 and B8.

Its function is as follows. Binds to 23S rRNA. Forms part of two intersubunit bridges in the 70S ribosome. The polypeptide is Large ribosomal subunit protein uL14 (Chromohalobacter salexigens (strain ATCC BAA-138 / DSM 3043 / CIP 106854 / NCIMB 13768 / 1H11)).